A 165-amino-acid polypeptide reads, in one-letter code: 6,7-dimethyl-8-ribityllumazine synthase (165 aa).

5-amino-6-(D-ribitylamino)uracil-binding positions include tryptophan 26, 57-59, and 79-81; these read SVE and VVV. Residue 84–85 coordinates (2S)-2-hydroxy-3-oxobutyl phosphate; it reads AT. The active-site Proton donor is histidine 87. Position 112 (histidine 112) interacts with 5-amino-6-(D-ribitylamino)uracil. Arginine 126 contributes to the (2S)-2-hydroxy-3-oxobutyl phosphate binding site.

The protein belongs to the DMRL synthase family.

It carries out the reaction (2S)-2-hydroxy-3-oxobutyl phosphate + 5-amino-6-(D-ribitylamino)uracil = 6,7-dimethyl-8-(1-D-ribityl)lumazine + phosphate + 2 H2O + H(+). Its pathway is cofactor biosynthesis; riboflavin biosynthesis; riboflavin from 2-hydroxy-3-oxobutyl phosphate and 5-amino-6-(D-ribitylamino)uracil: step 1/2. Its function is as follows. Catalyzes the formation of 6,7-dimethyl-8-ribityllumazine by condensation of 5-amino-6-(D-ribitylamino)uracil with 3,4-dihydroxy-2-butanone 4-phosphate. This is the penultimate step in the biosynthesis of riboflavin. The sequence is that of 6,7-dimethyl-8-ribityllumazine synthase from Salinispora arenicola (strain CNS-205).